The primary structure comprises 104 residues: Large ribosomal subunit protein bL21 (104 aa).

This sequence belongs to the bacterial ribosomal protein bL21 family. As to quaternary structure, part of the 50S ribosomal subunit. Contacts protein L20.

In terms of biological role, this protein binds to 23S rRNA in the presence of protein L20. This Streptococcus mutans serotype c (strain ATCC 700610 / UA159) protein is Large ribosomal subunit protein bL21.